The primary structure comprises 171 residues: Mitoferrin-1 (171 aa).

Positions 1–40 (MELRRGGVGSQARARRMDGDSRDGGGGCKDAGSEDYENLP) are disordered. One copy of the Solcar repeat lies at 43–131 (ASLSTHMTAG…FACYENMKRT (89 aa)). Helical transmembrane passes span 45 to 64 (LSTHMTAGAMAGILEHSVMY), 105 to 125 (RGLNVMMMGAGPAHAMYFACY), and 143 to 163 (HLANGICKRLSGVRKVSPSTD).

The protein belongs to the mitochondrial carrier (TC 2.A.29) family. As to quaternary structure, interacts with ACB10; this interaction stabilizes SLC25A37 and enhances the function of SLC25A37 to import mitochondrial iron during erythroid differentiation.

It localises to the mitochondrion inner membrane. The catalysed reaction is Fe(2+)(in) = Fe(2+)(out). In terms of biological role, mitochondrial iron transporter that specifically mediates iron uptake in developing erythroid cells, thereby playing an essential role in heme biosynthesis. The chain is Mitoferrin-1 (SLC25A37) from Bos taurus (Bovine).